The chain runs to 341 residues: Fructose-1,6-bisphosphatase, cytosolic (341 aa).

4 residues coordinate Mg(2+): Glu-100, Asp-121, Leu-123, and Asp-124. Substrate-binding positions include Asp-124–Ser-127, Asn-215, Tyr-247, Tyr-267, and Lys-277. Glu-283 serves as a coordination point for Mg(2+).

This sequence belongs to the FBPase class 1 family. Requires Mg(2+) as cofactor.

The protein localises to the cytoplasm. The catalysed reaction is beta-D-fructose 1,6-bisphosphate + H2O = beta-D-fructose 6-phosphate + phosphate. In Musa acuminata (Banana), this protein is Fructose-1,6-bisphosphatase, cytosolic (FBPban1).